An 85-amino-acid polypeptide reads, in one-letter code: Sodium channel neurotoxin MeuNaTxalpha-1 (85 aa).

Positions M1–S19 are cleaved as a signal peptide. The region spanning R21–N83 is the LCN-type CS-alpha/beta domain. The tract at residues D27 to C31 is specificity module, loop 1. Disulfide bonds link C31/C82, C35/C55, C41/C65, and C45/C67. Specificity module, loop regions lie at residues A58–G62 and P75–N83. Residue N83 is modified to Asparagine amide.

The protein belongs to the long (4 C-C) scorpion toxin superfamily. Sodium channel inhibitor family. Alpha subfamily. In terms of processing, C-terminal amidation does not appear to play an important role in activity, since the non-amidated recombinant toxin and the native toxin (which is amidated) show similar activities on all sodium channels tested. In terms of tissue distribution, expressed by the venom gland.

Its subcellular location is the secreted. Functionally, alpha toxins bind voltage-independently at site-3 of sodium channels (Nav) and inhibit the inactivation of the activated channels, thereby blocking neuronal transmission. This toxin inhibits inactivation of Nav1.6/SCN8A (EC(50)=3.1 uM) and drosophila DmNav1 (EC(50)=1.17 uM). It also shows a weak inhibition of inactivation on Nav1.2/SCN2A Nav1.3/SCN3A, and Nav1.7/SCN9A. The toxin (1 uM) does not significantly shift the midpoint of activation at the two channels, but induces a significant depolarizing shift in the V(1/2) of inactivation of the channels. The toxin has also been shown to dose-dependently stimulates intracellular signaling in DRG neurons through activation of two kinases (type II protein kinase A (PKA-II) and MAP kinases 1/3 (MAPK1/MAPK3)). Nav1.2/SCN2A is strongly suggested to be the target channel predominantly involved in this activation. In vivo, the toxin induces a dose-dependent thermal hyperalgesia lasting 30-45 minutes. The sequence is that of Sodium channel neurotoxin MeuNaTxalpha-1 from Mesobuthus eupeus (Lesser Asian scorpion).